Here is a 370-residue protein sequence, read N- to C-terminus: tRNA-specific 2-thiouridylase MnmA (370 aa).

Residues 11–18 and Met-37 each bind ATP; that span reads GMSGGVDS. Residues 97–99 are interaction with target base in tRNA; that stretch reads NPD. The Nucleophile role is filled by Cys-102. A disulfide bridge links Cys-102 with Cys-199. Residue Gly-126 coordinates ATP. Residues 149-151 are interaction with tRNA; the sequence is KDQ. The Cysteine persulfide intermediate role is filled by Cys-199. An interaction with tRNA region spans residues 307-308; it reads RY.

It belongs to the MnmA/TRMU family.

Its subcellular location is the cytoplasm. The catalysed reaction is S-sulfanyl-L-cysteinyl-[protein] + uridine(34) in tRNA + AH2 + ATP = 2-thiouridine(34) in tRNA + L-cysteinyl-[protein] + A + AMP + diphosphate + H(+). Functionally, catalyzes the 2-thiolation of uridine at the wobble position (U34) of tRNA, leading to the formation of s(2)U34. The protein is tRNA-specific 2-thiouridylase MnmA of Staphylococcus carnosus (strain TM300).